The sequence spans 328 residues: tRNA dimethylallyltransferase (328 aa).

10–17 (GPTASGKT) contributes to the ATP binding site. 12 to 17 (TASGKT) provides a ligand contact to substrate.

This sequence belongs to the IPP transferase family. As to quaternary structure, monomer. The cofactor is Mg(2+).

It catalyses the reaction adenosine(37) in tRNA + dimethylallyl diphosphate = N(6)-dimethylallyladenosine(37) in tRNA + diphosphate. In terms of biological role, catalyzes the transfer of a dimethylallyl group onto the adenine at position 37 in tRNAs that read codons beginning with uridine, leading to the formation of N6-(dimethylallyl)adenosine (i(6)A). The chain is tRNA dimethylallyltransferase from Bifidobacterium longum (strain NCC 2705).